We begin with the raw amino-acid sequence, 103 residues long: ATP synthase F(0) complex subunit g, mitochondrial (103 aa).

A2 is modified (N-acetylalanine). An N6-acetyllysine mark is found at K11, K24, K35, and K54.

As to quaternary structure, component of the ATP synthase complex composed at least of ATP5F1A/subunit alpha, ATP5F1B/subunit beta, ATP5MC1/subunit c (homooctomer), MT-ATP6/subunit a, MT-ATP8/subunit 8, ATP5ME/subunit e, ATP5MF/subunit f, ATP5MG/subunit g, ATP5MK/subunit k, ATP5MJ/subunit j, ATP5F1C/subunit gamma, ATP5F1D/subunit delta, ATP5F1E/subunit epsilon, ATP5PF/subunit F6, ATP5PB/subunit b, ATP5PD/subunit d, ATP5PO/subunit OSCP. ATP synthase complex consists of a soluble F(1) head domain (subunits alpha(3) and beta(3)) - the catalytic core - and a membrane F(0) domain - the membrane proton channel (subunits c, a, 8, e, f, g, k and j). These two domains are linked by a central stalk (subunits gamma, delta, and epsilon) rotating inside the F1 region and a stationary peripheral stalk (subunits F6, b, d, and OSCP).

The protein localises to the mitochondrion. Its subcellular location is the mitochondrion inner membrane. In terms of biological role, subunit g, of the mitochondrial membrane ATP synthase complex (F(1)F(0) ATP synthase or Complex V) that produces ATP from ADP in the presence of a proton gradient across the membrane which is generated by electron transport complexes of the respiratory chain. ATP synthase complex consist of a soluble F(1) head domain - the catalytic core - and a membrane F(1) domain - the membrane proton channel. These two domains are linked by a central stalk rotating inside the F(1) region and a stationary peripheral stalk. During catalysis, ATP synthesis in the catalytic domain of F(1) is coupled via a rotary mechanism of the central stalk subunits to proton translocation. In vivo, can only synthesize ATP although its ATP hydrolase activity can be activated artificially in vitro. Part of the complex F(0) domain. This Bos taurus (Bovine) protein is ATP synthase F(0) complex subunit g, mitochondrial.